A 121-amino-acid chain; its full sequence is Small ribosomal subunit protein bS6 (121 aa).

This sequence belongs to the bacterial ribosomal protein bS6 family.

Its function is as follows. Binds together with bS18 to 16S ribosomal RNA. In Rickettsia prowazekii (strain Madrid E), this protein is Small ribosomal subunit protein bS6 (rpsF).